Consider the following 300-residue polypeptide: U6 snRNA methylphosphate capping enzyme Amus (300 aa).

Polar residues predominate over residues 1 to 12 (MDLENNNNTPLT). Disordered regions lie at residues 1-21 (MDLE…KCAK) and 34-68 (VESK…GKPM). Over residues 34-44 (VESKRLKKEES) the composition is skewed to basic and acidic residues. Positions 95-300 (DIRLDVLGTQ…KRPIQIFTKS (206 aa)) constitute a Bin3-type SAM domain. S-adenosyl-L-methionine contacts are provided by asparagine 119 and aspartate 140.

The protein belongs to the methyltransferase superfamily.

It localises to the nucleus. Its function is as follows. Probable S-adenosyl-L-methionine-dependent methyltransferase that binds and stabilizes U6 snRNA, probably by adding a methylphosphate cap at its 5'-end. Required for U6 stability, but not stability of 7SK snRNAs, other miRNAs or tRNAs. U6 stabilization is required for efficient pre-mRNA splicing. Essential for organismal and germline development. This Drosophila melanogaster (Fruit fly) protein is U6 snRNA methylphosphate capping enzyme Amus.